The primary structure comprises 380 residues: Cytosolic acyl coenzyme A thioester hydrolase (380 aa).

One can recognise a HotDog ACOT-type 1 domain in the interval 50 to 168 (PCGACITGRI…TLWYVPLSLK (119 aa)). The active site involves Asn-66. An N6-acetyllysine mark is found at Lys-168 and Lys-198. Positions 224 to 338 (SYSQSSLIHL…FFTYVSLSQE (115 aa)) constitute a HotDog ACOT-type 2 domain. Asp-255 is a catalytic residue. Lys-283 carries the N6-acetyllysine modification. The disordered stretch occupies residues 350–380 (ETEDEKKRFEEGKGRYLQMKAKRQGHAEPQP). Basic and acidic residues predominate over residues 353-363 (DEKKRFEEGKG).

In terms of assembly, homohexamer. Isoform 4 is expressed exclusively in brain.

The protein resides in the cytoplasm. It localises to the cytosol. Its subcellular location is the mitochondrion. It catalyses the reaction hexadecanoyl-CoA + H2O = hexadecanoate + CoA + H(+). The enzyme catalyses octanoyl-CoA + H2O = octanoate + CoA + H(+). It carries out the reaction dodecanoyl-CoA + H2O = dodecanoate + CoA + H(+). The catalysed reaction is (9Z)-octadecenoyl-CoA + H2O = (9Z)-octadecenoate + CoA + H(+). It catalyses the reaction tetradecanoyl-CoA + H2O = tetradecanoate + CoA + H(+). The enzyme catalyses decanoyl-CoA + H2O = decanoate + CoA + H(+). It carries out the reaction octadecanoyl-CoA + H2O = octadecanoate + CoA + H(+). It functions in the pathway lipid metabolism; fatty acid metabolism. Its function is as follows. Catalyzes the hydrolysis of acyl-CoAs into free fatty acids and coenzyme A (CoASH), regulating their respective intracellular levels. Preferentially hydrolyzes palmitoyl-CoA, but has a broad specificity acting on other fatty acyl-CoAs with chain-lengths of C8-C18. May play an important physiological function in brain. The chain is Cytosolic acyl coenzyme A thioester hydrolase (ACOT7) from Homo sapiens (Human).